Here is a 397-residue protein sequence, read N- to C-terminus: Pyridinium-3,5-bisthiocarboxylic acid mononucleotide nickel insertion protein (397 aa).

It belongs to the LarC family.

The enzyme catalyses Ni(II)-pyridinium-3,5-bisthiocarboxylate mononucleotide = pyridinium-3,5-bisthiocarboxylate mononucleotide + Ni(2+). Involved in the biosynthesis of a nickel-pincer cofactor ((SCS)Ni(II) pincer complex). Binds Ni(2+), and functions in nickel delivery to pyridinium-3,5-bisthiocarboxylic acid mononucleotide (P2TMN), to form the mature cofactor. Is thus probably required for the activation of nickel-pincer cofactor-dependent enzymes. This chain is Pyridinium-3,5-bisthiocarboxylic acid mononucleotide nickel insertion protein, found in Thermotoga petrophila (strain ATCC BAA-488 / DSM 13995 / JCM 10881 / RKU-1).